The following is a 73-amino-acid chain: TKCYVTPDATSQTCPDGQDICYTKTWCDGFCSSRGKRIDLGCAATCPKVKPGVDIKCCSTDNCNPFPTWKRKH.

Intrachain disulfides connect C3-C21, C14-C42, C27-C31, C46-C57, and C58-C63.

This sequence belongs to the three-finger toxin family. Long-chain subfamily. Type II alpha-neurotoxin sub-subfamily. As to expression, expressed by the venom gland.

It is found in the secreted. Functionally, binds with high affinity to muscular (alpha-1/CHRNA1) and neuronal (alpha-7/CHRNA7) nicotinic acetylcholine receptor (nAChR) and inhibits acetylcholine from binding to the receptor, thereby impairing neuromuscular and neuronal transmission. This is Long neurotoxin 2 from Ophiophagus hannah (King cobra).